The primary structure comprises 271 residues: Formamidopyrimidine-DNA glycosylase (271 aa).

The Schiff-base intermediate with DNA role is filled by Pro2. Residue Glu3 is the Proton donor of the active site. Lys58 serves as the catalytic Proton donor; for beta-elimination activity. 3 residues coordinate DNA: His91, Arg110, and Arg152. An FPG-type zinc finger spans residues 237–271; that stretch reads RVYDRAGQPCRVCGEPIRCVRLGQRATYYCPRCQR. Arg261 serves as the catalytic Proton donor; for delta-elimination activity.

This sequence belongs to the FPG family. In terms of assembly, monomer. It depends on Zn(2+) as a cofactor.

It carries out the reaction Hydrolysis of DNA containing ring-opened 7-methylguanine residues, releasing 2,6-diamino-4-hydroxy-5-(N-methyl)formamidopyrimidine.. The enzyme catalyses 2'-deoxyribonucleotide-(2'-deoxyribose 5'-phosphate)-2'-deoxyribonucleotide-DNA = a 3'-end 2'-deoxyribonucleotide-(2,3-dehydro-2,3-deoxyribose 5'-phosphate)-DNA + a 5'-end 5'-phospho-2'-deoxyribonucleoside-DNA + H(+). Involved in base excision repair of DNA damaged by oxidation or by mutagenic agents. Acts as a DNA glycosylase that recognizes and removes damaged bases. Has a preference for oxidized purines, such as 7,8-dihydro-8-oxoguanine (8-oxoG). Has AP (apurinic/apyrimidinic) lyase activity and introduces nicks in the DNA strand. Cleaves the DNA backbone by beta-delta elimination to generate a single-strand break at the site of the removed base with both 3'- and 5'-phosphates. This Methylococcus capsulatus (strain ATCC 33009 / NCIMB 11132 / Bath) protein is Formamidopyrimidine-DNA glycosylase.